A 197-amino-acid chain; its full sequence is Small ribosomal subunit protein uS4B (197 aa).

Residues 88-150 form the S4 RNA-binding domain; sequence SRLDNMVYRM…SRKTEMFVNN (63 aa).

The protein belongs to the universal ribosomal protein uS4 family. As to quaternary structure, part of the 30S ribosomal subunit. Contacts protein S5. The interaction surface between S4 and S5 is involved in control of translational fidelity.

In terms of biological role, one of the primary rRNA binding proteins, it binds directly to 16S rRNA where it nucleates assembly of the body of the 30S subunit. Functionally, with S5 and S12 plays an important role in translational accuracy. In Clostridium perfringens (strain 13 / Type A), this protein is Small ribosomal subunit protein uS4B (rpsD2).